We begin with the raw amino-acid sequence, 1708 residues long: Clathrin heavy chain 2 (1708 aa).

Residues 1–492 are globular terminal domain; that stretch reads MAAANAPIAM…VDNDLALKIY (492 aa). WD40-like repeat stretches follow at residues 25–67, 68–113, 114–155, 156–205, 206–270, 271–314, and 315–343; these read FVTF…RPIT, ADSA…MPEQ, VVFW…ANLA, NNQI…QALE, AHAA…PDFQ, DDFP…ISPD, and PIFL…ATVN. The binding site for the uncoating ATPase, involved in lattice disassembly stretch occupies residues 462-478; the sequence is ENWLAEDKLECSEELGD. Positions 493-536 are flexible linker; sequence IKARATPKVVAAFAERREFDKILIYSKQVGYTPDYLFLLQTILR. Residues 537-648 are distal segment; sequence TDPQGAVNFA…RALQHYTELP (112 aa). The segment at 537–1708 is heavy chain arm; that stretch reads TDPQGAVNFA…AYGMPPMGSY (1172 aa). 7 CHCR repeats span residues 551–697, 700–842, 847–986, 993–1138, 1142–1283, 1288–1434, and 1437–1580; these read QMEG…QIVV, AKEY…PEDF, ILSV…QLID, LPES…VSEA, FIRA…FRLA, LNII…DLIN, and LNVL…KECF. Residues 653–1708 form a proximal segment region; that stretch reads VMVNTHAIEP…AYGMPPMGSY (1056 aa). Residues 1227–1536 form an involved in binding clathrin light chain region; sequence AAKIIYAFIS…YIYKKAGRWK (310 aa). Positions 1564–1708 are trimerization; it reads SEDLLVYFIE…AYGMPPMGSY (145 aa).

The protein belongs to the clathrin heavy chain family. Clathrin triskelions, composed of 3 heavy chains and 3 light chains, are the basic subunits of the clathrin coat.

It is found in the cytoplasmic vesicle membrane. It localises to the membrane. The protein localises to the coated pit. Clathrin is the major protein of the polyhedral coat of coated pits and vesicles. The protein is Clathrin heavy chain 2 of Oryza sativa subsp. japonica (Rice).